A 237-amino-acid polypeptide reads, in one-letter code: Myelin protein zero-like protein 3 (237 aa).

The N-terminal stretch at 1 to 32 (MQLARGTVGGRGCALFPLLSILVVQGARIVLS) is a signal peptide. The Ig-like V-type domain maps to 33–149 (LEISADAHVR…NIPLTELTVT (117 aa)). Topologically, residues 33-159 (LEISADAHVR…ERGFGTMLSS (127 aa)) are extracellular. A disulfide bond links Cys53 and Cys129. A glycan (N-linked (GlcNAc...) asparagine) is linked at Asn124. The chain crosses the membrane as a helical span at residues 160 to 180 (VALLSILVFVPSAVVVILLLV). Residues 181-237 (RMGRKATGVQKRSRSGYKKSSIEVSDDTDQEDSNDCMTRLCVRCAECLDSDYEEEAY) are Cytoplasmic-facing.

The protein belongs to the myelin P0 protein family. As to expression, present in all tissues tested, including the skin. Present in the keratinocytes and sebocytes in the skin (at protein level).

Its subcellular location is the membrane. Its function is as follows. Mediates homophilic cell-cell adhesion. The protein is Myelin protein zero-like protein 3 (Mpzl3) of Mus musculus (Mouse).